Consider the following 144-residue polypeptide: Methylglyoxal synthase (144 aa).

The MGS-like domain maps to 1–144 (MNIALIAHDE…EEEQRKFLTD (144 aa)). Substrate-binding positions include H8, K12, 34-37 (TGTT), and 54-55 (SG). Residue D60 is the Proton donor/acceptor of the active site. H87 contributes to the substrate binding site.

Belongs to the methylglyoxal synthase family.

The enzyme catalyses dihydroxyacetone phosphate = methylglyoxal + phosphate. Functionally, catalyzes the formation of methylglyoxal from dihydroxyacetone phosphate. The polypeptide is Methylglyoxal synthase (Exiguobacterium sibiricum (strain DSM 17290 / CCUG 55495 / CIP 109462 / JCM 13490 / 255-15)).